Consider the following 547-residue polypeptide: uncharacterized protein (547 aa).

Topologically, residues 1–19 (MVRLNHAASYFMPIFCSTR) are cytoplasmic. The chain crosses the membrane as a helical span at residues 20–40 (PHIVILSALFSISLFSLFYAS). The Vacuolar segment spans residues 41-64 (SELLLHQYDDPLMFKPNSQDYFRT). A helical transmembrane segment spans residues 65 to 85 (FLLGLFSPFLYYFLKTFLFNI). The Cytoplasmic segment spans residues 86–89 (NQRF). A helical transmembrane segment spans residues 90–110 (LILNLIVDFPINDVFMLLILI). Over 111 to 139 (GLAYPQVQDHEGGTIKHKECSWHIIPRQA) the chain is Vacuolar. Residues 140–160 (YIFGISWALGEFTICIIGNLF) form a helical membrane-spanning segment. Over 161 to 340 (NYQEIADPNI…RFIAFSTAYQ (180 aa)) the chain is Cytoplasmic. Serine 225 bears the Phosphoserine mark. The disordered stretch occupies residues 237–271 (PIKPLRSSSSTYGSIRQQPHENKKQLHVPDNSQDD). A compositionally biased stretch (polar residues) spans 242-253 (RSSSSTYGSIRQ). Residues 341–361 (LVTGLLLMILVVGSNIMLTIG) form a helical membrane-spanning segment. Residues 362 to 394 (ESLILSMYFVYVRGHEGLFTPVVNYFGSRTISN) are Vacuolar-facing. Residues 395–415 (FILCVIIPFISLNFLINTSIY) traverse the membrane as a helical segment. Over 416 to 523 (LRRELDDWFN…NWRALARNDS (108 aa)) the chain is Cytoplasmic. The helical transmembrane segment at 524–544 (FVLGVMVSWSLLVFVTGILST) threads the bilayer. Residues 545 to 547 (VYI) are Vacuolar-facing.

It localises to the vacuole membrane. This is an uncharacterized protein from Saccharomyces cerevisiae (strain ATCC 204508 / S288c) (Baker's yeast).